Consider the following 584-residue polypeptide: Protein phosphatase 2A scaffold subunit (584 aa).

14 HEAT repeats span residues 7 to 45 (ESDDYHPIVILIDELKNEDIQLRLNSIKKLQSIAKALGP), 46 to 84 (ERTRTELIPYLQDSVLEDEDEVLVVLSEELGNLIEFVGG), 86 to 123 (EHAVCLLPPLQILAGAEELVVREKAVESLCKIAKEIPT), 168 to 206 (LRKTFGGLCHDDTPMVKRAAATNLGSFAKQIEKESVKSE), 207 to 239 (ILPLFQSLSTDEQDSVRLLGVENCALLGSMLTN), 240 to 278 (EENIQFILPTIKASSLDKSWRVRYMVARLLKELCESMGT), 279 to 317 (EITKTELIGAFVKLLKDTEAEVRTEASLRIADVCSLLTK), 318 to 356 (EMNIKTILPCVKDLVSDSSQHVRAALAQVIMSLAPIYGK), 358 to 395 (DTLTHLLELFLHLLKDDFPDVRLNIISKLDQVSKVIGI), 397 to 434 (MLSQSLLPAIVELAEDHQWRVRLAIIDYIPLLASQLGV), 441 to 479 (LGNLCMTWLGDPVFSIREAATNNLKKLTEVFGVDWAKNN), 480 to 512 (IIPKVLSLHSHPNYLYRMTTLFSISTLSTVVGG), 513 to 551 (DVISSSMVPLLAKMVSDKVPNIRFNVAKTFQTIIPLLDS), and 553 to 584 (IVQSRVKPLLVKLHEDTDKDVKFYASQALQLC).

It belongs to the phosphatase 2A regulatory subunit A family. Component of the Sca1 complex composed of at least gefA, gefH, scaA, phr, and the protein phosphatase 2A subunits pppA and pho2B.

Its subcellular location is the cytoplasm. It localises to the cytosol. The protein localises to the cell membrane. In terms of biological role, scaffolding molecule which may coordinate the assembly of the catalytic subunit and a variable regulatory B subunit. Component of the Sca1 complex, a regulator of cell motility, chemotaxis and signal relay. The Sca1 complex is recruited to the plasma membrane in a chemoattractant- and F-actin-dependent manner and is enriched at the leading edge of chemotaxing cells where it regulates F-actin dynamics and signal relay by controlling the activation of rasC and the downstream target of rapamycin complex 2 (TORC2)-Akt/protein kinase B (PKB) pathway. The sequence is that of Protein phosphatase 2A scaffold subunit (pppA) from Dictyostelium discoideum (Social amoeba).